The following is a 217-amino-acid chain: Membrane-associated progesterone receptor component 2 (217 aa).

O-linked (Xyl...) (chondroitin sulfate) serine glycosylation is present at Ser-15. Residues 40–62 (ALLATGGEMLLNVALVALVLLGA) traverse the membrane as a helical segment. Residues Ser-84, Ser-98, and Ser-202 each carry the phosphoserine modification. The 100-residue stretch at 96-195 (DFSLEQLRQY…EKYDYVGRLL (100 aa)) folds into the Cytochrome b5 heme-binding domain. The tract at residues 196–217 (KPGEEPSEYTDEEDTKDHSKQD) is disordered. Residues 200–209 (EPSEYTDEED) are compositionally biased toward acidic residues. Tyr-204 is subject to Phosphotyrosine. Thr-205 bears the Phosphothreonine mark.

The protein belongs to the cytochrome b5 family. MAPR subfamily. Interacts with PGRMC1. Interacts with AAAS.

The protein localises to the membrane. Its subcellular location is the nucleus envelope. It localises to the endoplasmic reticulum. It is found in the secreted. Its function is as follows. Required for the maintenance of uterine histoarchitecture and normal female reproductive lifespan. May serve as a universal non-classical progesterone receptor in the uterus. Intracellular heme chaperone required for delivery of labile, or signaling heme, to the nucleus. Plays a role in adipocyte function and systemic glucose homeostasis. In brown fat, which has a high demand for heme, delivery of labile heme in the nucleus regulates the activity of heme-responsive transcriptional repressors such as NR1D1 and BACH1. This is Membrane-associated progesterone receptor component 2 from Rattus norvegicus (Rat).